Consider the following 505-residue polypeptide: MSFRINPLNAIDFYKADHRRQYPEGTEYVYANFTPRSSRLANMLHDFDDKIVFFGLQGFIQHFLIETWNEGFFNQDKATVVSHYKRRMDTSLGEGAVSVEHIEALHDLGYLPLKIKALPEGSRVNMRVPVLTVINTQAEFFWLTNYIETVLSAELWKSSTTATIAFEYKRLLTQYAVKTGASIENVVVQGHDFSSRGMSGIYDAAQSGVGHLTSFIGTDAVTAIDYAEQYYAASGVVGVSVPATEHSVMCMGSEENELETFRRLICELYPSGIVSIVSDTWDFWRVLSEFSVKLKQDILNRTPNALGLAKVVFRPDSGDPVKIICGDPDAEKDTPAYKGAVQLLWEIFGGTYTAQGYKVLHERVGLIYGDSITLQRAEAILQGLEAQGFASSNLVFGIGSYTYNYMTRDTFGFAVKATWGQVNGVGRELFKDPVTDSGTKKSAQGLLRVERSQDGFTLFDRQSKQQENQGELHTVFENGQLCLKSTLDEIRQRLAQQLESFKDSN.

Residue Arg196 participates in diphosphate binding. Asp219 is a beta-nicotinamide D-ribonucleotide binding site. Diphosphate contacts are provided by His246 and Arg314. Residues 314 to 316, 369 to 370, and Arg408 contribute to the beta-nicotinamide D-ribonucleotide site; these read RPD and GD.

This sequence belongs to the NAPRTase family.

It catalyses the reaction beta-nicotinamide D-ribonucleotide + diphosphate = 5-phospho-alpha-D-ribose 1-diphosphate + nicotinamide + H(+). The protein operates within cofactor biosynthesis; NAD(+) biosynthesis; nicotinamide D-ribonucleotide from 5-phospho-alpha-D-ribose 1-diphosphate and nicotinamide: step 1/1. With respect to regulation, 10-fold more active in the presence of saturating ATP. Functionally, catalyzes the condensation of nicotinamide with 5-phosphoribosyl-1-pyrophosphate to yield nicotinamide mononucleotide, an intermediate in the biosynthesis of NAD. Functions in the nondeamidating salvage pathway for production of NAD from nicotinamide. Displays a strict preference for nicotinamide over nicotinate substrate. In Acinetobacter baylyi (strain ATCC 33305 / BD413 / ADP1), this protein is Nicotinamide phosphoribosyltransferase.